The sequence spans 233 residues: Large ribosomal subunit protein uL1 (233 aa).

Belongs to the universal ribosomal protein uL1 family. In terms of assembly, part of the 50S ribosomal subunit.

Binds directly to 23S rRNA. The L1 stalk is quite mobile in the ribosome, and is involved in E site tRNA release. In terms of biological role, protein L1 is also a translational repressor protein, it controls the translation of the L11 operon by binding to its mRNA. This chain is Large ribosomal subunit protein uL1, found in Campylobacter concisus (strain 13826).